We begin with the raw amino-acid sequence, 374 residues long: Putative glutamate--cysteine ligase 2-2 (374 aa).

This sequence belongs to the glutamate--cysteine ligase type 2 family. YbdK subfamily.

The catalysed reaction is L-cysteine + L-glutamate + ATP = gamma-L-glutamyl-L-cysteine + ADP + phosphate + H(+). ATP-dependent carboxylate-amine ligase which exhibits weak glutamate--cysteine ligase activity. The chain is Putative glutamate--cysteine ligase 2-2 from Rhodococcus jostii (strain RHA1).